The primary structure comprises 517 residues: Amidophosphoribosyltransferase (517 aa).

Met1 is modified (N-acetylmethionine). The propeptide occupies 1-11 (MELEESGIREE). The active-site Nucleophile is Cys12. The 250-residue stretch at 12 to 261 (CGVFGCIASG…PGEIVEISRH (250 aa)) folds into the Glutamine amidotransferase type-2 domain. Cys280 is a binding site for [4Fe-4S] cluster. Ser327, Asp389, and Asp390 together coordinate Mg(2+). Cys426, Cys503, and Cys506 together coordinate [4Fe-4S] cluster.

It in the C-terminal section; belongs to the purine/pyrimidine phosphoribosyltransferase family. In terms of assembly, homotetramer. Mg(2+) serves as cofactor. The cofactor is [4Fe-4S] cluster. Expressed at a high level in brain, heart, liver and stomach.

It catalyses the reaction 5-phospho-beta-D-ribosylamine + L-glutamate + diphosphate = 5-phospho-alpha-D-ribose 1-diphosphate + L-glutamine + H2O. It functions in the pathway purine metabolism; IMP biosynthesis via de novo pathway; N(1)-(5-phospho-D-ribosyl)glycinamide from 5-phospho-alpha-D-ribose 1-diphosphate: step 1/2. Its activity is regulated as follows. Activated by the substrate 5-phospho-alpha-D-ribosyl-1-pyrophosphate and inhibited by the purine ribonucleotides, the end products of purine biosynthesis. In terms of biological role, catalyzes the formation of phosphoribosylamine from phosphoribosylpyrophosphate (PRPP) and glutamine. In Rattus norvegicus (Rat), this protein is Amidophosphoribosyltransferase (Ppat).